The chain runs to 309 residues: Pyridoxal 5'-phosphate synthase subunit PDX1.3 (309 aa).

Methionine 1 is modified (N-acetylmethionine). Aspartate 40 contributes to the D-ribose 5-phosphate binding site. Lysine 97 serves as the catalytic Schiff-base intermediate with D-ribose 5-phosphate. A D-ribose 5-phosphate-binding site is contributed by glycine 169. Arginine 181 contributes to the D-glyceraldehyde 3-phosphate binding site. D-ribose 5-phosphate-binding positions include glycine 230 and 251-252 (GS).

The protein belongs to the PdxS/SNZ family. In terms of assembly, homodimer or heterodimer with PDX1.1 or PDX1.2. Interacts with PDX2. As to expression, expressed in cotyledons, rapidly dividing root stele tissues, stems, leaves, flowers, mature pollen, and siliques.

It localises to the cytoplasm. It is found in the cell membrane. The protein resides in the membrane. The enzyme catalyses aldehydo-D-ribose 5-phosphate + D-glyceraldehyde 3-phosphate + L-glutamine = pyridoxal 5'-phosphate + L-glutamate + phosphate + 3 H2O + H(+). Its pathway is cofactor biosynthesis; pyridoxal 5'-phosphate biosynthesis. In terms of biological role, catalyzes the formation of pyridoxal 5'-phosphate from ribose 5-phosphate (RBP), glyceraldehyde 3-phosphate (G3P) and ammonia. The ammonia is provided by PDX2. Can also use ribulose 5-phosphate and dihydroxyacetone phosphate as substrates, resulting from enzyme-catalyzed isomerization of RBP and G3P, respectively. Also plays an indirect role in resistance to singlet oxygen-generating photosensitizers. The sequence is that of Pyridoxal 5'-phosphate synthase subunit PDX1.3 (PDX13) from Arabidopsis thaliana (Mouse-ear cress).